Consider the following 98-residue polypeptide: NADH-ubiquinone oxidoreductase chain 4L (98 aa).

3 consecutive transmembrane segments (helical) span residues 1–21 (MIPT…GMLT), 27–47 (VASL…ATLI), and 61–81 (IILL…LISI).

The protein belongs to the complex I subunit 4L family. In terms of assembly, core subunit of respiratory chain NADH dehydrogenase (Complex I) which is composed of 45 different subunits.

The protein resides in the mitochondrion inner membrane. It carries out the reaction a ubiquinone + NADH + 5 H(+)(in) = a ubiquinol + NAD(+) + 4 H(+)(out). In terms of biological role, core subunit of the mitochondrial membrane respiratory chain NADH dehydrogenase (Complex I) which catalyzes electron transfer from NADH through the respiratory chain, using ubiquinone as an electron acceptor. Part of the enzyme membrane arm which is embedded in the lipid bilayer and involved in proton translocation. The chain is NADH-ubiquinone oxidoreductase chain 4L (MT-ND4L) from Macaca hecki (Heck's macaque).